The chain runs to 378 residues: Putative zinc finger protein 302L (378 aa).

The segment at 3–25 adopts a C2H2-type; degenerate zinc-finger fold; sequence IVCEFCDKSFDSKSKVNAHQRTK.

This sequence belongs to the IIV-6 302L family.

In Invertebrate iridescent virus 6 (IIV-6), this protein is Putative zinc finger protein 302L.